The primary structure comprises 383 residues: Succinyl-diaminopimelate desuccinylase (383 aa).

Position 73 (H73) interacts with Zn(2+). D75 is an active-site residue. A Zn(2+)-binding site is contributed by D107. E141 acts as the Proton acceptor in catalysis. E142, E170, and H356 together coordinate Zn(2+).

This sequence belongs to the peptidase M20A family. DapE subfamily. Homodimer. Requires Zn(2+) as cofactor. Co(2+) serves as cofactor.

It catalyses the reaction N-succinyl-(2S,6S)-2,6-diaminopimelate + H2O = (2S,6S)-2,6-diaminopimelate + succinate. Its pathway is amino-acid biosynthesis; L-lysine biosynthesis via DAP pathway; LL-2,6-diaminopimelate from (S)-tetrahydrodipicolinate (succinylase route): step 3/3. Its function is as follows. Catalyzes the hydrolysis of N-succinyl-L,L-diaminopimelic acid (SDAP), forming succinate and LL-2,6-diaminopimelate (DAP), an intermediate involved in the bacterial biosynthesis of lysine and meso-diaminopimelic acid, an essential component of bacterial cell walls. This is Succinyl-diaminopimelate desuccinylase from Pseudomonas aeruginosa (strain ATCC 15692 / DSM 22644 / CIP 104116 / JCM 14847 / LMG 12228 / 1C / PRS 101 / PAO1).